The primary structure comprises 223 residues: MPSLSHESDSITLAADADERPLALRIAQALDAMREGRPVVLLDDDDRENEADLILAAECLTPSNMAMMIRECSGIVCLCLTTDKVRQLGLRPMVENNRSQYGTAFTVSIEAREGVTTGVSAVDRITTIRAAIAKDAGTDAVVSPGHVFPLVAVDGGVLVRRGHTEGSVELARMAGLSPAAVLCELMNPDGTMARRPEALSFAEMYRLPILTIADLVAWREIHG.

Residues 47-48 (RE), aspartate 52, 160-164 (RRGHT), and glutamate 184 each bind D-ribulose 5-phosphate. Mg(2+) is bound at residue glutamate 48. Residue histidine 163 coordinates Mg(2+).

Belongs to the DHBP synthase family. In terms of assembly, homodimer. It depends on Mg(2+) as a cofactor. Mn(2+) serves as cofactor.

It catalyses the reaction D-ribulose 5-phosphate = (2S)-2-hydroxy-3-oxobutyl phosphate + formate + H(+). It participates in cofactor biosynthesis; riboflavin biosynthesis; 2-hydroxy-3-oxobutyl phosphate from D-ribulose 5-phosphate: step 1/1. Functionally, catalyzes the conversion of D-ribulose 5-phosphate to formate and 3,4-dihydroxy-2-butanone 4-phosphate. The chain is 3,4-dihydroxy-2-butanone 4-phosphate synthase from Cupriavidus pinatubonensis (strain JMP 134 / LMG 1197) (Cupriavidus necator (strain JMP 134)).